Consider the following 596-residue polypeptide: Aspartate--tRNA(Asp/Asn) ligase (596 aa).

Glutamate 175 contacts L-aspartate. The segment at 199–202 is aspartate; it reads QQYK. The L-aspartate site is built by arginine 221 and histidine 454. Residue 221–223 participates in ATP binding; that stretch reads RDE. Glutamate 488 is a binding site for ATP. Arginine 495 lines the L-aspartate pocket. Residue 540–543 participates in ATP binding; the sequence is GIDR.

This sequence belongs to the class-II aminoacyl-tRNA synthetase family. Type 1 subfamily. Homodimer.

The protein localises to the cytoplasm. The catalysed reaction is tRNA(Asx) + L-aspartate + ATP = L-aspartyl-tRNA(Asx) + AMP + diphosphate. Its function is as follows. Aspartyl-tRNA synthetase with relaxed tRNA specificity since it is able to aspartylate not only its cognate tRNA(Asp) but also tRNA(Asn). Reaction proceeds in two steps: L-aspartate is first activated by ATP to form Asp-AMP and then transferred to the acceptor end of tRNA(Asp/Asn). The polypeptide is Aspartate--tRNA(Asp/Asn) ligase (Rhizobium johnstonii (strain DSM 114642 / LMG 32736 / 3841) (Rhizobium leguminosarum bv. viciae)).